The sequence spans 145 residues: Probable low molecular weight protein-tyrosine-phosphatase EpsP (145 aa).

Cys9 serves as the catalytic Nucleophile. Arg15 is an active-site residue. Asp114 (proton donor) is an active-site residue.

Belongs to the low molecular weight phosphotyrosine protein phosphatase family.

The catalysed reaction is O-phospho-L-tyrosyl-[protein] + H2O = L-tyrosyl-[protein] + phosphate. It functions in the pathway glycan metabolism; exopolysaccharide biosynthesis. Its function is as follows. May be involved in assembly or function of the EPS I polymerization/export complex and/or the EpsB ATPase. Alternatively it may function in the removal of the terminal phosphate from C55-isoprenyl pyrophosphate in order to recycle the C55-isoprenyl phosphate lipid carrier used in the synthesis of polysaccharide repeat units. This Ralstonia solanacearum (Pseudomonas solanacearum) protein is Probable low molecular weight protein-tyrosine-phosphatase EpsP (epsP).